Consider the following 367-residue polypeptide: Putative F-box/kelch-repeat protein At4g39600 (367 aa).

An F-box domain is found at 11-57 (ATSNPSLPEDLVVSCLARVSRLYYPTLSLVSKSFRSLIASPDLYKTR). 2 Kelch repeats span residues 127–171 (HLYA…LDGK) and 172–216 (MYLA…EGKI).

This Arabidopsis thaliana (Mouse-ear cress) protein is Putative F-box/kelch-repeat protein At4g39600.